A 113-amino-acid polypeptide reads, in one-letter code: SVLQPCQPINETISVEKDGCPKCLVFQTSICSGHCITKDPSYKSPLSTVYQRVCTYRDVRYETVRLPDCRPGVDPHVTFPVALSCDCNLCTMDTSDCAIQSLRPDFCMSQRAP.

Intrachain disulfides connect C6-C54, C20-C69, C23-C107, C31-C85, C35-C87, and C90-C97. N10 carries an N-linked (GlcNAc...) asparagine glycan.

It belongs to the glycoprotein hormones subunit beta family. In terms of assembly, heterodimer of an alpha and a beta chain.

It localises to the secreted. Its function is as follows. Involved in gametogenesis and steroidogenesis. This chain is Gonadotropin subunit beta (cgb), found in Muraenesox cinereus (Daggertooth pike conger).